A 359-amino-acid polypeptide reads, in one-letter code: Peptide chain release factor 1 (359 aa).

Gln-236 carries the post-translational modification N5-methylglutamine.

It belongs to the prokaryotic/mitochondrial release factor family. Methylated by PrmC. Methylation increases the termination efficiency of RF1.

The protein localises to the cytoplasm. Peptide chain release factor 1 directs the termination of translation in response to the peptide chain termination codons UAG and UAA. The polypeptide is Peptide chain release factor 1 (Streptococcus agalactiae serotype V (strain ATCC BAA-611 / 2603 V/R)).